A 130-amino-acid chain; its full sequence is Small ribosomal subunit protein uS11 (130 aa).

This sequence belongs to the universal ribosomal protein uS11 family. In terms of assembly, part of the 30S ribosomal subunit. Interacts with proteins S7 and S18. Binds to IF-3.

Functionally, located on the platform of the 30S subunit, it bridges several disparate RNA helices of the 16S rRNA. Forms part of the Shine-Dalgarno cleft in the 70S ribosome. The protein is Small ribosomal subunit protein uS11 of Prochlorococcus marinus (strain MIT 9303).